A 455-amino-acid polypeptide reads, in one-letter code: Serine--tRNA ligase (455 aa).

An L-serine-binding site is contributed by 252–254 (TSE). Residues 283-285 (RKE) and Val299 each bind ATP. Glu306 contacts L-serine. 370 to 373 (EVVS) is a binding site for ATP. Thr406 contributes to the L-serine binding site.

This sequence belongs to the class-II aminoacyl-tRNA synthetase family. Type-1 seryl-tRNA synthetase subfamily. In terms of assembly, homodimer. The tRNA molecule binds across the dimer.

It is found in the cytoplasm. The catalysed reaction is tRNA(Ser) + L-serine + ATP = L-seryl-tRNA(Ser) + AMP + diphosphate + H(+). It carries out the reaction tRNA(Sec) + L-serine + ATP = L-seryl-tRNA(Sec) + AMP + diphosphate + H(+). It functions in the pathway aminoacyl-tRNA biosynthesis; selenocysteinyl-tRNA(Sec) biosynthesis; L-seryl-tRNA(Sec) from L-serine and tRNA(Sec): step 1/1. Catalyzes the attachment of serine to tRNA(Ser). Is also able to aminoacylate tRNA(Sec) with serine, to form the misacylated tRNA L-seryl-tRNA(Sec), which will be further converted into selenocysteinyl-tRNA(Sec). This Thermococcus sibiricus (strain DSM 12597 / MM 739) protein is Serine--tRNA ligase.